We begin with the raw amino-acid sequence, 132 residues long: Small ribosomal subunit protein uS8c (132 aa).

It belongs to the universal ribosomal protein uS8 family. Part of the 30S ribosomal subunit.

It is found in the plastid. Its subcellular location is the chloroplast. In terms of biological role, one of the primary rRNA binding proteins, it binds directly to 16S rRNA central domain where it helps coordinate assembly of the platform of the 30S subunit. This Phaeodactylum tricornutum (strain CCAP 1055/1) protein is Small ribosomal subunit protein uS8c (rps8).